The following is a 246-amino-acid chain: MAAVDIRDNLLGISWVDSSWIPILNSGSVLDYFSERSNPFYDRTCNNEVVKMQRLTLEHLNQMVGIEYILLHAQEPILFIIRKQQRQSPAQVIPLADYYIIAGVIYQAPDLGSVINSRVLTAVHGIQSAFDEAMSYCRYHPSKGYWWHFKDHEEQEKVKPKAKRKEEPSSIFQRQRVDALLIDLRQKFPPRFVQQKSGEKPVPVDQAKKEAEPLPETVKSEEKESTKNIQQTVSTKGPPEKRMRLQ.

The segment at 191–246 is disordered; it reads RFVQQKSGEKPVPVDQAKKEAEPLPETVKSEEKESTKNIQQTVSTKGPPEKRMRLQ. The segment covering 206–226 has biased composition (basic and acidic residues); that stretch reads QAKKEAEPLPETVKSEEKEST. Lysine 208 participates in a covalent cross-link: Glycyl lysine isopeptide (Lys-Gly) (interchain with G-Cter in SUMO2). N6-acetyllysine is present on residues lysine 236 and lysine 241.

It belongs to the Mediator complex subunit 6 family. As to quaternary structure, component of the Mediator complex, which is composed of MED1, MED4, MED6, MED7, MED8, MED9, MED10, MED11, MED12, MED13, MED13L, MED14, MED15, MED16, MED17, MED18, MED19, MED20, MED21, MED22, MED23, MED24, MED25, MED26, MED27, MED29, MED30, MED31, CCNC, CDK8 and CDC2L6/CDK11. The MED12, MED13, CCNC and CDK8 subunits form a distinct module termed the CDK8 module. Mediator containing the CDK8 module is less active than Mediator lacking this module in supporting transcriptional activation. Individual preparations of the Mediator complex lacking one or more distinct subunits have been variously termed ARC, CRSP, DRIP, PC2, SMCC and TRAP. Interacts with CTNNB1 and GLI3.

Its subcellular location is the nucleus. Functionally, component of the Mediator complex, a coactivator involved in the regulated transcription of nearly all RNA polymerase II-dependent genes. Mediator functions as a bridge to convey information from gene-specific regulatory proteins to the basal RNA polymerase II transcription machinery. Mediator is recruited to promoters by direct interactions with regulatory proteins and serves as a scaffold for the assembly of a functional preinitiation complex with RNA polymerase II and the general transcription factors. In Mus musculus (Mouse), this protein is Mediator of RNA polymerase II transcription subunit 6 (Med6).